Consider the following 139-residue polypeptide: MAMTVHCDIVSAERQLFSGLVEIVVASGVEGDLGIMPGHAPLLTRLKPGPVRVKKQNGEEEVFYVSGGFLEVQPKLVTVLADTAERAENMDAAEAERAKARAKEALEGKSSEMDYSRAAATLIEAVAQLRAIQQLKNKR.

Belongs to the ATPase epsilon chain family. In terms of assembly, F-type ATPases have 2 components, CF(1) - the catalytic core - and CF(0) - the membrane proton channel. CF(1) has five subunits: alpha(3), beta(3), gamma(1), delta(1), epsilon(1). CF(0) has three main subunits: a, b and c.

The protein resides in the cell inner membrane. Functionally, produces ATP from ADP in the presence of a proton gradient across the membrane. This Alcanivorax borkumensis (strain ATCC 700651 / DSM 11573 / NCIMB 13689 / SK2) protein is ATP synthase epsilon chain.